The chain runs to 265 residues: Endochitinase At2g43580 (265 aa).

An N-terminal signal peptide occupies residues 1–24; it reads MALTKIFLILLLSLLGLYSETVKS. Residues 25–59 form the Chitin-binding type-1 domain; the sequence is QNCDCAPNLCCSQFGYCGTTADYCGSTCQSGPCRV. 4 cysteine pairs are disulfide-bonded: C27–C35, C29–C41, C34–C48, and C52–C57. The interval 67–265 is catalytic; the sequence is GLVGNIVTQI…GLDPGANITC (199 aa). A glycan (N-linked (GlcNAc...) asparagine) is linked at N102. E129 functions as the Proton donor in the catalytic mechanism. The N-linked (GlcNAc...) asparagine glycan is linked to N262.

The protein belongs to the glycosyl hydrolase 19 family. Chitinase class I subfamily.

The catalysed reaction is Random endo-hydrolysis of N-acetyl-beta-D-glucosaminide (1-&gt;4)-beta-linkages in chitin and chitodextrins.. The polypeptide is Endochitinase At2g43580 (Arabidopsis thaliana (Mouse-ear cress)).